The sequence spans 447 residues: Chorismate synthase, chloroplastic (447 aa).

The disordered stretch occupies residues 1 to 24; the sequence is MASSLSTKPFLSGSRRRSTTDGSG. A chloroplast-targeting transit peptide spans 1–57; that stretch reads MASSLSTKPFLSGSRRRSTTDGSGWSYFQTSDLRQLSNQSVQISVRRQTAPLKLVVQ.

This sequence belongs to the chorismate synthase family. As to quaternary structure, homotetramer. FMNH2 is required as a cofactor. In terms of processing, the N-terminus is blocked.

It is found in the plastid. The protein resides in the chloroplast. It carries out the reaction 5-O-(1-carboxyvinyl)-3-phosphoshikimate = chorismate + phosphate. It functions in the pathway metabolic intermediate biosynthesis; chorismate biosynthesis; chorismate from D-erythrose 4-phosphate and phosphoenolpyruvate: step 7/7. Its function is as follows. Catalyzes the last common step of the biosynthesis of aromatic amino acids, produced via the shikimic acid pathway. The protein is Chorismate synthase, chloroplastic of Capnoides sempervirens (Rock-harlequin).